The chain runs to 333 residues: E3 ubiquitin-protein ligase MIR1 (333 aa).

An RING-CH-type zinc finger spans residues 1-60 (MEDEDVPVCWICNEELGNERFRACGCTGELENVHRSCLSTWLTISRNTACQICGVVYNTR). Residues 1–82 (MEDEDVPVCW…PRLTYQEGLE (82 aa)) are Cytoplasmic-facing. Zn(2+) is bound by residues cysteine 9, cysteine 12, cysteine 24, cysteine 26, histidine 34, cysteine 37, cysteine 50, and cysteine 53. A helical membrane pass occupies residues 83–103 (LIVFIFIMTLGAAGLAAATWV). At 104-121 (WLYIVGGHDPEIDHVAAA) the chain is on the extracellular side. The helical transmembrane segment at 122–142 (AYYVFFVFYQLFVVFGLGAFF) threads the bilayer. Residues 143 to 333 (HMMRHVGRAY…SAVSSALMFH (191 aa)) lie on the Cytoplasmic side of the membrane. The disordered stretch occupies residues 187–257 (GDNQDEEGPA…GRDDNVEPTA (71 aa)). Over residues 195 to 221 (PAGAAPGDQNGPAGAAPGDQDGPADGA) the composition is skewed to low complexity. The segment covering 235–252 (AGYKEAGEPTHNDGRDDN) has biased composition (basic and acidic residues).

Binds human MHC-I and CD1D.

The protein localises to the host cell membrane. Its subcellular location is the host endoplasmic reticulum. The enzyme catalyses [E2 ubiquitin-conjugating enzyme]-S-ubiquitinyl-L-cysteine + [acceptor protein]-L-cysteine = [E2 ubiquitin-conjugating enzyme]-L-cysteine + [acceptor protein]-S-ubiquitinyl-L-cysteine.. It participates in protein modification; protein ubiquitination. Functionally, membrane-bound E3 ubiquitin ligase expressed during late stages of lytic replication to mediate polyubiquitination of various host membrane proteins related to the immune response. Promotes ubiquitination and subsequent degradation of host MHC-I and CD1D molecules, DC-SIGN and DC-SIGNR, presumably to prevent lysis of infected cells by cytotoxic T-lymphocytes. Binds target molecules through transmembrane interaction. E3 ubiquitin-protein ligases accept ubiquitin from specific E2 ubiquitin-conjugating enzymes, and then transfer it to target protein. The result of this ubiquitination is the enhancement of the endocytosis of the target chain and the delivery to the lysosome, where it is proteolytically destroyed. Induces ubiquitination not only on lysines, but also on cysteine residues. The protein is E3 ubiquitin-protein ligase MIR1 (K3) of Human herpesvirus 8 type P (isolate GK18) (HHV-8).